The primary structure comprises 182 residues: Inner membrane-spanning protein YciB (182 aa).

The next 5 helical transmembrane spans lie at 22-42 (IYAA…VVWV), 53-73 (ITLV…NEAF), 76-96 (WKVT…QFLF), 121-141 (FSWG…AFYL), and 149-169 (FKVF…GIYI).

It belongs to the YciB family.

The protein localises to the cell inner membrane. Its function is as follows. Plays a role in cell envelope biogenesis, maintenance of cell envelope integrity and membrane homeostasis. In Tolumonas auensis (strain DSM 9187 / NBRC 110442 / TA 4), this protein is Inner membrane-spanning protein YciB.